Reading from the N-terminus, the 67-residue chain is MARITVEDCLEQIPNRFQLVLAATYRARMLSQGHAPKIESRNKPAVTALREIAAGKVGLEMLKKVPG.

It belongs to the RNA polymerase subunit omega family. As to quaternary structure, the RNAP catalytic core consists of 2 alpha, 1 beta, 1 beta' and 1 omega subunit. When a sigma factor is associated with the core the holoenzyme is formed, which can initiate transcription.

The enzyme catalyses RNA(n) + a ribonucleoside 5'-triphosphate = RNA(n+1) + diphosphate. In terms of biological role, promotes RNA polymerase assembly. Latches the N- and C-terminal regions of the beta' subunit thereby facilitating its interaction with the beta and alpha subunits. In Acidovorax ebreus (strain TPSY) (Diaphorobacter sp. (strain TPSY)), this protein is DNA-directed RNA polymerase subunit omega.